The sequence spans 642 residues: ATP-dependent rRNA helicase spb4 (642 aa).

Residues 14 to 42 (WDGVTPALSEWVLDAVASMGFTRMTPVQA) carry the Q motif motif. The 206-residue stretch at 45–250 (IPLFMAHKDV…RVGLRNPVKV (206 aa)) folds into the Helicase ATP-binding domain. 58 to 65 (AVTGSGKT) contacts ATP. Residues 198 to 201 (DEAD) carry the DEAD box motif. The Helicase C-terminal domain maps to 284–438 (AIKHILYSLE…TLTITDADAA (155 aa)). Positions 522–625 (AYKDKQREKR…RLLRRAAKDK (104 aa)) form a coiled coil. Basic and acidic residues-rich tracts occupy residues 527–536 (QREKRRKEQV) and 577–628 (AKQA…KESK). A disordered region spans residues 527 to 642 (QREKRRKEQV…DDDDEFKGFD (116 aa)). The segment covering 632–642 (GDDDDEFKGFD) has biased composition (acidic residues).

The protein belongs to the DEAD box helicase family. DDX55/SPB4 subfamily. As to quaternary structure, component of pre-60S ribosomal complexes.

The protein localises to the nucleus. Its subcellular location is the nucleolus. The enzyme catalyses ATP + H2O = ADP + phosphate + H(+). Its function is as follows. ATP-binding RNA helicase involved in the biogenesis of 60S ribosomal subunits. Binds 90S pre-ribosomal particles and dissociates from pre-60S ribosomal particles after processing of 27SB pre-rRNA. Required for the normal formation of 18S rRNA through the processing of pre-rRNAs at sites A0, A1 and A2, and the normal formation of 25S and 5.8S rRNAs through the processing of pre-rRNAs at sites C1 and C2. In Aspergillus niger (strain ATCC MYA-4892 / CBS 513.88 / FGSC A1513), this protein is ATP-dependent rRNA helicase spb4.